A 192-amino-acid chain; its full sequence is Epoxyqueuosine reductase QueH (192 aa).

4 residues coordinate [4Fe-4S] cluster: C9, C10, C87, and C90. C169 and C171 form a disulfide bridge.

Belongs to the QueH family.

It carries out the reaction epoxyqueuosine(34) in tRNA + AH2 = queuosine(34) in tRNA + A + H2O. It participates in tRNA modification; tRNA-queuosine biosynthesis. Functionally, catalyzes the conversion of epoxyqueuosine (oQ) to queuosine (Q), which is a hypermodified base found in the wobble positions of tRNA(Asp), tRNA(Asn), tRNA(His) and tRNA(Tyr). The protein is Epoxyqueuosine reductase QueH of Thermotoga maritima (strain ATCC 43589 / DSM 3109 / JCM 10099 / NBRC 100826 / MSB8).